The primary structure comprises 381 residues: Transcriptional regulatory protein FlgR (381 aa).

The Response regulatory domain occupies 2–113; it reads KIAIVEDDIN…LLLESIYRTK (112 aa). Aspartate 51 carries the 4-aspartylphosphate modification. One can recognise a Sigma-54 factor interaction domain in the interval 136-365; that stretch reads FLAASKALEE…LLGVVERAAI (230 aa). Residues 164-171 and 227-236 contribute to the ATP site; these read GESGVGKE and ANKGTIFLDE.

Post-translationally, phosphorylated by FlgS.

In terms of biological role, member of the two-component regulatory system FlgR/FlgS that induces the transcriptional induction of the genes needed in motility and flagellar biogenesis. Upon phosphorylation by FlgS, functions as a transcriptional regulator and activates transcription of RpoN-dependent flagellar genes. The chain is Transcriptional regulatory protein FlgR (flgR) from Helicobacter pylori (strain ATCC 700392 / 26695) (Campylobacter pylori).